Consider the following 371-residue polypeptide: Opine oxidase subunit B (371 aa).

As to quaternary structure, heterodimer of a subunit A and a subunit B.

It functions in the pathway opine metabolism; octopine degradation. Functionally, oxidative cleavage of octopine into L-arginine and pyruvate. The polypeptide is Opine oxidase subunit B (ooxB) (Rhizobium meliloti (Ensifer meliloti)).